The chain runs to 605 residues: Glucose-6-phosphate isomerase (605 aa).

Glutamate 410 functions as the Proton donor in the catalytic mechanism. Catalysis depends on residues histidine 441 and lysine 569.

Belongs to the GPI family.

The protein resides in the cytoplasm. It catalyses the reaction alpha-D-glucose 6-phosphate = beta-D-fructose 6-phosphate. It functions in the pathway carbohydrate degradation; glycolysis; D-glyceraldehyde 3-phosphate and glycerone phosphate from D-glucose: step 2/4. In Leishmania mexicana, this protein is Glucose-6-phosphate isomerase (PGI).